We begin with the raw amino-acid sequence, 720 residues long: Biotin biosynthesis bifunctional protein BioWF (720 aa).

Positions 1-39 (MRFSIKMRASARVSSSPSTSDGSSGDHTESRDRADRHIS) are disordered. Over residues 8-23 (RASARVSSSPSTSDGS) the composition is skewed to low complexity. The segment covering 24–39 (SGDHTESRDRADRHIS) has biased composition (basic and acidic residues). R314 serves as a coordination point for substrate. Position 401–402 (401–402 (GY)) interacts with pyridoxal 5'-phosphate. H439 lines the substrate pocket. Pyridoxal 5'-phosphate-binding positions include S488, 513–516 (DDAH), and 564–567 (TASK). K567 bears the N6-(pyridoxal phosphate)lysine mark. Position 684 (T684) interacts with substrate.

It in the N-terminal section; belongs to the BioW family. This sequence in the C-terminal section; belongs to the class-II pyridoxal-phosphate-dependent aminotransferase family. BioF subfamily. Homodimer. Mg(2+) serves as cofactor. The cofactor is pyridoxal 5'-phosphate.

The enzyme catalyses heptanedioate + ATP + CoA = 6-carboxyhexanoyl-CoA + AMP + diphosphate. The catalysed reaction is 6-carboxyhexanoyl-[ACP] + L-alanine + H(+) = (8S)-8-amino-7-oxononanoate + holo-[ACP] + CO2. The protein operates within metabolic intermediate metabolism; pimeloyl-CoA biosynthesis; pimeloyl-CoA from pimelate: step 1/1. It functions in the pathway cofactor biosynthesis; biotin biosynthesis. Its function is as follows. Catalyzes both the decarboxylative condensation of pimeloyl-[acyl-carrier protein] and L-alanine to produce 8-amino-7-oxononanoate (AON), [acyl-carrier protein], and carbon dioxide, and the transformation of pimelate into pimeloyl-CoA with concomitant hydrolysis of ATP to AMP. In Corynebacterium kroppenstedtii (strain DSM 44385 / JCM 11950 / CIP 105744 / CCUG 35717), this protein is Biotin biosynthesis bifunctional protein BioWF (bioWF).